A 492-amino-acid chain; its full sequence is Trehalose-6-phosphate synthase (492 aa).

A D-glucose 6-phosphate-binding site is contributed by R25. 45–46 (GG) contributes to the UDP-alpha-D-glucose binding site. 2 residues coordinate D-glucose 6-phosphate: Y101 and D155. UDP-alpha-D-glucose-binding residues include R297 and K302. Residue R335 coordinates D-glucose 6-phosphate. Residue 400 to 404 (LVAKE) coordinates UDP-alpha-D-glucose.

This sequence belongs to the glycosyltransferase 20 family. Homotetramer.

It catalyses the reaction ADP-alpha-D-glucose + D-glucose 6-phosphate = alpha,alpha-trehalose 6-phosphate + ADP + H(+). The catalysed reaction is CDP-alpha-D-glucose + D-glucose 6-phosphate = alpha,alpha-trehalose 6-phosphate + CDP + H(+). It carries out the reaction GDP-alpha-D-glucose + D-glucose 6-phosphate = alpha,alpha-trehalose 6-phosphate + GDP + H(+). The enzyme catalyses TDP-alpha-D-glucose + D-glucose 6-phosphate = 5-methyl-UDP + alpha,alpha-trehalose 6-phosphate + H(+). It catalyses the reaction D-glucose 6-phosphate + UDP-alpha-D-glucose = alpha,alpha-trehalose 6-phosphate + UDP + H(+). It functions in the pathway glycan biosynthesis; trehalose biosynthesis. Functionally, probably involved in the osmoprotection via the biosynthesis of trehalose and in the production of glycogen and alpha-glucan via the TreS-Pep2 branch involved in the biosynthesis of maltose-1-phosphate (M1P). Catalyzes the transfer of glucose from UDP-glucose (UDP-Glc) to D-glucose 6-phosphate (Glc-6-P) to form trehalose-6-phosphate. Probably also able to use ADP-Glc, CDP-Glc, GDP-Glc and TDP-Glc as glucosyl donors. In Mycobacterium avium (strain 104), this protein is Trehalose-6-phosphate synthase.